A 300-amino-acid chain; its full sequence is Auxin-responsive protein IAA7 (300 aa).

2 disordered regions span residues 1-80 (MGEA…DGDK) and 92-125 (VSHSQGKANKNKGSPEEEEAHPPPATGNNALASN). The EAR-like (transcriptional repression) motif lies at 43 to 47 (LSLGL). Residues 92-103 (VSHSQGKANKNK) are compositionally biased toward polar residues. The region spanning 177 to 281 (APFIKINMDG…SVKRLRVLKT (105 aa)) is the PB1 domain.

This sequence belongs to the Aux/IAA family. Homodimers and heterodimers. As to expression, expressed at low levels in roots and shoots.

The protein resides in the nucleus. Its function is as follows. Aux/IAA proteins are short-lived transcriptional factors that function as repressors of early auxin response genes at low auxin concentrations. This Oryza sativa subsp. japonica (Rice) protein is Auxin-responsive protein IAA7 (IAA7).